Reading from the N-terminus, the 123-residue chain is Histone H2B (123 aa).

Residues Met1–Arg32 form a disordered region. The span at Gly9 to Ala18 shows a compositional bias: basic residues. Ser110 carries an O-linked (GlcNAc) serine glycan. Lys118 participates in a covalent cross-link: Glycyl lysine isopeptide (Lys-Gly) (interchain with G-Cter in ubiquitin).

It belongs to the histone H2B family. As to quaternary structure, the nucleosome is a histone octamer containing two molecules each of H2A, H2B, H3 and H4 assembled in one H3-H4 heterotetramer and two H2A-H2B heterodimers. The octamer wraps approximately 147 bp of DNA. Post-translationally, monoubiquitination of Lys-118 gives a specific tag for epigenetic transcriptional activation and is also prerequisite for histone H3 'Lys-4' and 'Lys-79' methylation. GlcNAcylation at Ser-110 promotes monoubiquitination of Lys-118. It fluctuates in response to extracellular glucose, and associates with transcribed genes.

The protein localises to the nucleus. It is found in the chromosome. Core component of nucleosome. Nucleosomes wrap and compact DNA into chromatin, limiting DNA accessibility to the cellular machineries which require DNA as a template. Histones thereby play a central role in transcription regulation, DNA repair, DNA replication and chromosomal stability. DNA accessibility is regulated via a complex set of post-translational modifications of histones, also called histone code, and nucleosome remodeling. The sequence is that of Histone H2B from Holothuria tubulosa (Tubular sea cucumber).